A 288-amino-acid polypeptide reads, in one-letter code: Bifunctional protein FolD (288 aa).

NADP(+)-binding positions include 171–173 (GRS), S196, and T237.

It belongs to the tetrahydrofolate dehydrogenase/cyclohydrolase family. Homodimer.

It carries out the reaction (6R)-5,10-methylene-5,6,7,8-tetrahydrofolate + NADP(+) = (6R)-5,10-methenyltetrahydrofolate + NADPH. It catalyses the reaction (6R)-5,10-methenyltetrahydrofolate + H2O = (6R)-10-formyltetrahydrofolate + H(+). It functions in the pathway one-carbon metabolism; tetrahydrofolate interconversion. Catalyzes the oxidation of 5,10-methylenetetrahydrofolate to 5,10-methenyltetrahydrofolate and then the hydrolysis of 5,10-methenyltetrahydrofolate to 10-formyltetrahydrofolate. The chain is Bifunctional protein FolD from Elusimicrobium minutum (strain Pei191).